We begin with the raw amino-acid sequence, 176 residues long: ATP-dependent protease subunit HslV (176 aa).

The active site involves T2. Positions 157, 160, and 163 each coordinate Na(+).

This sequence belongs to the peptidase T1B family. HslV subfamily. In terms of assembly, a double ring-shaped homohexamer of HslV is capped on each side by a ring-shaped HslU homohexamer. The assembly of the HslU/HslV complex is dependent on binding of ATP.

Its subcellular location is the cytoplasm. It carries out the reaction ATP-dependent cleavage of peptide bonds with broad specificity.. Its activity is regulated as follows. Allosterically activated by HslU binding. In terms of biological role, protease subunit of a proteasome-like degradation complex believed to be a general protein degrading machinery. This is ATP-dependent protease subunit HslV from Pseudomonas entomophila (strain L48).